The following is a 254-amino-acid chain: E3 ubiquitin-protein ligase NEURL3 (254 aa).

The NHR domain occupies 17 to 174 (ALSFHGNATG…TTKAIELLDP (158 aa)). The segment at 197 to 236 (CVICFHNTANTRLMPCGHSHFCGSCAWHIFKDTARCPICR) adopts an RING-type zinc-finger fold.

Expressed in alveolar epithelial type II cells.

It localises to the cytoplasm. The enzyme catalyses S-ubiquitinyl-[E2 ubiquitin-conjugating enzyme]-L-cysteine + [acceptor protein]-L-lysine = [E2 ubiquitin-conjugating enzyme]-L-cysteine + N(6)-ubiquitinyl-[acceptor protein]-L-lysine.. Its pathway is protein modification; protein ubiquitination. In terms of biological role, E3 ubiquitin-protein ligase that plays a role in various biological processes such as lung development or innate immunity. Seems to utilize UBE2E1. Promotes innate antiviral response by catalyzing 'Lys-63'-linked ubiquitination of IRF7. Plays an essential role in TLR4-mediated activation of MAPK pathways by promoting 'Lys-48'-linked polyubiquitination of the phosphatase DUSP1/MKP1. In Mus musculus (Mouse), this protein is E3 ubiquitin-protein ligase NEURL3 (Neurl3).